The primary structure comprises 463 residues: MNGSTSSDAVDPGLCVTTPSPVKQTLTLGSDTFNKDDKQITPSIRRSNSTRSKGINFNVAISPLATGQTPPSSKGGHRKTASYDAKNLHLPQLAESSPSSTIPDSPIPTASEELKYDLPLPSTEQLMGLDIDDQLRLLALKEMSIVEIKDSIGNLTSKLQRNENELHSLREVIQRSLYKELNSSSSKSKKETSSNGFVTRPQRQNSNPREEAIASTKNRSRRRTLSSSSSGVPPVLSSQQLSQNTDKQSRRDSTLWSNLSKPLNLIQQFDSMLQHEFEKSMIPQKNQEGSDKTMDSHKSRHSEDSTSSLGSISSPLNSKSKSVTGKQSNDELDRYFAQQSTSGASKDKPDGVVPTESHMNSDDMIQAVSSSIWSFVNDVKTNVLSSLADEDVPESRSHVTKGPSGFSNSNDQKEINDLTVYNLDTGSTVSLDKNEDSDLDYTFVHNTANEDRAAVDHDKSKND.

The interval Met-1–Ala-110 is disordered. Polar residues-rich tracts occupy residues Thr-17–Thr-32 and Ile-40–Ile-55. Residues Ser-96–Ala-110 are compositionally biased toward low complexity. Positions Ile-145–Leu-177 form a coiled coil. 3 disordered regions span residues Glu-180–Leu-255, Met-281–His-358, and Ala-388–Lys-413. Residues Leu-225–Ser-238 are compositionally biased toward low complexity. The span at Glu-288 to Asp-304 shows a compositional bias: basic and acidic residues. Over residues Ser-305 to Ser-322 the composition is skewed to low complexity.

Belongs to the TDA11 family.

Its subcellular location is the cytoplasm. In Debaryomyces hansenii (strain ATCC 36239 / CBS 767 / BCRC 21394 / JCM 1990 / NBRC 0083 / IGC 2968) (Yeast), this protein is Topoisomerase I damage affected protein 11 (TDA11).